Consider the following 616-residue polypeptide: Dihydroxy-acid dehydratase (616 aa).

Asp-81 serves as a coordination point for Mg(2+). Cys-122 contributes to the [2Fe-2S] cluster binding site. 2 residues coordinate Mg(2+): Asp-123 and Lys-124. Residue Lys-124 is modified to N6-carboxylysine. Cys-195 contributes to the [2Fe-2S] cluster binding site. Mg(2+) is bound at residue Glu-491. Ser-517 functions as the Proton acceptor in the catalytic mechanism.

Belongs to the IlvD/Edd family. In terms of assembly, homodimer. [2Fe-2S] cluster is required as a cofactor. The cofactor is Mg(2+).

It catalyses the reaction (2R)-2,3-dihydroxy-3-methylbutanoate = 3-methyl-2-oxobutanoate + H2O. The catalysed reaction is (2R,3R)-2,3-dihydroxy-3-methylpentanoate = (S)-3-methyl-2-oxopentanoate + H2O. Its pathway is amino-acid biosynthesis; L-isoleucine biosynthesis; L-isoleucine from 2-oxobutanoate: step 3/4. It functions in the pathway amino-acid biosynthesis; L-valine biosynthesis; L-valine from pyruvate: step 3/4. In terms of biological role, functions in the biosynthesis of branched-chain amino acids. Catalyzes the dehydration of (2R,3R)-2,3-dihydroxy-3-methylpentanoate (2,3-dihydroxy-3-methylvalerate) into 2-oxo-3-methylpentanoate (2-oxo-3-methylvalerate) and of (2R)-2,3-dihydroxy-3-methylbutanoate (2,3-dihydroxyisovalerate) into 2-oxo-3-methylbutanoate (2-oxoisovalerate), the penultimate precursor to L-isoleucine and L-valine, respectively. This Salmonella dublin (strain CT_02021853) protein is Dihydroxy-acid dehydratase.